Reading from the N-terminus, the 188-residue chain is Elongation factor P (188 aa).

Belongs to the elongation factor P family.

Its subcellular location is the cytoplasm. It participates in protein biosynthesis; polypeptide chain elongation. Its function is as follows. Involved in peptide bond synthesis. Stimulates efficient translation and peptide-bond synthesis on native or reconstituted 70S ribosomes in vitro. Probably functions indirectly by altering the affinity of the ribosome for aminoacyl-tRNA, thus increasing their reactivity as acceptors for peptidyl transferase. This chain is Elongation factor P, found in Rickettsia akari (strain Hartford).